Consider the following 1680-residue polypeptide: Sodium channel protein type 7 subunit alpha (1680 aa).

The Cytoplasmic segment spans residues 1 to 117 (MLTSPEPKGL…RRAVIKVLVH (117 aa)). One copy of the I repeat lies at 100-401 (TLSPLSSLRR…ILTMAYEQEK (302 aa)). The chain crosses the membrane as a helical span at residues 118–137 (PLFRLLILISVLTDSILMCM). Residues 138–141 (SNLP) lie on the Extracellular side of the membrane. The helical transmembrane segment at 142–167 (EWILAVENTLLGIYTFEILVKVIARG) threads the bilayer. Topologically, residues 168–178 (IWAGSFSFLGD) are cytoplasmic. The helical transmembrane segment at 179 to 196 (LWNWLDFSVTLFELITRS) threads the bilayer. Residues 197-200 (SPLS) are Extracellular-facing. The helical transmembrane segment at 201–219 (SLPMFKTIRTLRILKIIPL) threads the bilayer. Residues 220-237 (NHGLQSIVVTLVQCLKKL) lie on the Cytoplasmic side of the membrane. Residues 238–259 (LGAIALALFFLTVSSLFGMGLF) form a helical membrane-spanning segment. At 260–338 (MGNLKHKCVR…PDNGFTSFDN (79 aa)) the chain is on the extracellular side. Residues cysteine 267 and cysteine 307 are joined by a disulfide bond. N-linked (GlcNAc...) asparagine glycans are attached at residues asparagine 281 and asparagine 309. The pore-forming intramembrane region spans 339–366 (FGWALLAMFRLMTQDYPELLYHQILYAS). Residue glycine 367 is a topological domain, extracellular. The chain crosses the membrane as a helical span at residues 368-407 (KIYMIFFVLISFWFAFYMASLFLGILTMAYEQEKQRASEE). At 408–505 (SRDMDSKCHQ…EFADRIITHP (98 aa)) the chain is on the cytoplasmic side. Residues 487 to 756 (CSPCWIKLNE…QLAVAWIKMV (270 aa)) form an II repeat. A helical membrane pass occupies residues 506-521 (LFDLFLVICIILNICF). The Extracellular segment spans residues 522–530 (LALEHFPMS). The chain crosses the membrane as a helical span at residues 531–559 (EELMSLLAIGNLVFIGIYTIEMILKIIAM). Residues 560-568 (HPYGYFQIS) are Cytoplasmic-facing. A helical membrane pass occupies residues 569–586 (WHIFDSILVVLGLTEMLL). Residues 587 to 592 (ADIEEI) lie on the Extracellular side of the membrane. Residues 593 to 608 (TVFILVPLIFIKLGKY) form a helical membrane-spanning segment. The Cytoplasmic segment spans residues 609 to 625 (APPFKNLMRILGRALVA). Residues 626-654 (LKDLVLLVSIFIYFSAVFGMKLFGRSYKD) form a helical membrane-spanning segment. At 655–672 (CVCHVDQDCQRQRWHMSD) the chain is on the extracellular side. Intrachain disulfides connect cysteine 657/cysteine 663 and cysteine 695/cysteine 704. Residues 673–699 (FLHAYVTVFRILCGEWIETLWECMEVA) constitute an intramembrane region (pore-forming). Residue glycine 700 is a topological domain, extracellular. A helical membrane pass occupies residues 701–731 (EAWCIPFYMMVILIGNLLILYLFVALVSSFA). The Cytoplasmic segment spans residues 732–933 (SYDATTEVSK…KTCCKIVENS (202 aa)). The segment covering 807 to 833 (DQSSGTEKTPVTESESQSLIASPSVSE) has biased composition (polar residues). Residues 807–874 (DQSSGTEKTP…MKQSSSSECS (68 aa)) are disordered. Position 842 is a phosphoserine (serine 842). The III repeat unit spans residues 915-1223 (NGKIWRNIRK…KKQYRALKKL (309 aa)). The chain crosses the membrane as a helical span at residues 934 to 952 (WFECFIGLVTLLCTGTLAL). The Extracellular portion of the chain corresponds to 953–960 (EDIYIDQR). A helical membrane pass occupies residues 961 to 989 (KTIKIFLEYGDMIFAYIFILEMLLKWVAY). Over 990–997 (GFKAYFSN) the chain is Cytoplasmic. Residues 998 to 1019 (NWYKLDFMVVIVLCLSLIGKTR) traverse the membrane as a helical segment. Position 1020 (glutamate 1020) is a topological domain, extracellular. Residues 1021–1039 (DLNPLASIKFLRALRVLSQ) form a helical membrane-spanning segment. Over 1040-1054 (FERMKVVLRALIKTT) the chain is Cytoplasmic. A helical membrane pass occupies residues 1055 to 1079 (LPAVSVFLVCLMIWLLFSVMGVFLF). Over 1080–1126 (AGKFYECIDPTRGERFSVFEVMNKSQCENLVFNESMPWENAKLNFDN) the chain is Extracellular. A disulfide bond links cysteine 1086 and cysteine 1106. Asparagine 1102 and asparagine 1112 each carry an N-linked (GlcNAc...) asparagine glycan. Positions 1127–1153 (VGNGFLSLFQVATFNGWISIMNSAIDS) form an intramembrane region, pore-forming. Residues 1154–1166 (VGVYMQPSFEHSL) are Extracellular-facing. Residues 1167–1201 (HMYTYFIIFVVFGLFLPLCMLIGVIIRNFNKQKIK) form a helical membrane-spanning segment. The Cytoplasmic segment spans residues 1202-1249 (QGGSNIFITVKQKKQYRALKKLLYADSQKPAARPRNKFQGFICDVVTH). An IV repeat occupies 1232–1530 (AARPRNKFQG…WNRFDPDRTQ (299 aa)). The helical transmembrane segment at 1250 to 1271 (RVFNVIIILLICFQATTIMIQN) threads the bilayer. The Extracellular segment spans residues 1272-1275 (DEQS). A helical membrane pass occupies residues 1276–1304 (PQIETAVFWMNSLFTMLFTLECILKLTAF). Topologically, residues 1305-1311 (RCHYFTS) are cytoplasmic. Residues 1312-1337 (AWNVHDFMVVVFSITGLLLPLSIGQY) traverse the membrane as a helical segment. Residues 1338–1340 (FVP) lie on the Extracellular side of the membrane. A helical membrane pass occupies residues 1341-1361 (PSLVQLLLLSRIIHVLRPGKG). Topologically, residues 1362-1376 (PKVFHDLMLPLMLSL) are cytoplasmic. Residues 1377-1401 (PALLNIALLIFLVMFIYAIFGMYNF) traverse the membrane as a helical segment. Residues 1402–1419 (AYVKKEAGINDVSNFETF) are Extracellular-facing. An intramembrane region (pore-forming) is located at residues 1420–1443 (GSSMLCLFQVTTFSGWDGMLDAIF). Residues 1444–1467 (NSQWSDCDPDKINPGTQVRGDCGS) are Extracellular-facing. Cysteine 1450 and cysteine 1465 form a disulfide bridge. A helical membrane pass occupies residues 1468–1503 (PSVGIFYFVSYILISWLIIVNMYVVLIMEFLSIPSK). The Cytoplasmic portion of the chain corresponds to 1504-1680 (RKNRTLSEDD…EEKASIQTQI (177 aa)). Positions 1646 to 1680 (KIQDIPEIDDGREDPNSKGVHSGQIEEKASIQTQI) are disordered.

This sequence belongs to the sodium channel (TC 1.A.1.10) family. SCN7A subfamily. The sodium channel formed by SCN7A is probably a heterooligomeric complex consisting of the ion conducting pore forming alpha subunit SCN7A and regulatory beta subunits such as SCN3B. Interacts with ATP1A1; activates ATP1A1 and thereby indirectly signals to nearby neurons to regulate sodium homeostasis. As to expression, not tissue specific but widely expressed.

It localises to the cell membrane. The enzyme catalyses Na(+)(in) = Na(+)(out). Sodium leak channel functioning as an osmosensor regulating sodium ion levels in various tissues and organs. While most sodium channels are voltage-gated, SCN7A is not and lets sodium flow through membrane along its concentration gradient. In glial cells of the central nervous system, senses body-fluid sodium levels and controls salt intake behavior as well as voluntary water intake through activation of nearby neurons to maintain appropriate sodium levels in the body. By mediating sodium influx into keratinocytes, also plays a role in skin barrier homeostasis. This chain is Sodium channel protein type 7 subunit alpha, found in Rattus norvegicus (Rat).